The sequence spans 473 residues: Membrane protein TMS1 (473 aa).

The Cytoplasmic segment spans residues 1–6; it reads MGAVIS. The chain crosses the membrane as a helical span at residues 7–29; the sequence is LPVSMAGSFVASCFGGCCSNLVT. At 30–38 the chain is on the vacuolar side; sequence KTASSLGSS. A helical membrane pass occupies residues 39-61; it reads SLGTRLLYAVWLLLNSLISWVSY. Over 62-81 the chain is Cytoplasmic; it reads SANKSILWPGKTCTGTGECG. A helical transmembrane segment spans residues 82–104; that stretch reads FFTVHRLNFALGCLHLILALVLT. At 105–118 the chain is on the vacuolar side; the sequence is GVKSTNDVRAALQN. Residues 119–138 traverse the membrane as a helical segment; that stretch reads SWWSLKFILYLCLIVLSFVI. Over 139–144 the chain is Cytoplasmic; sequence PNDFYI. The helical transmembrane segment at 145–167 threads the bilayer; the sequence is FFSKWVSVPSGAIFILVGLILLV. The Vacuolar segment spans residues 168-194; that stretch reads DFAHEWAETCISHVESEDEDSSFWQRF. A helical transmembrane segment spans residues 195-217; the sequence is LVLGTTSMYTASIIMTVVMYVMF. Residues 218–228 lie on the Cytoplasmic side of the membrane; that stretch reads CHQQCNMNQTA. A helical membrane pass occupies residues 229-246; it reads VTVNLILTVITLVLSVNP. Topologically, residues 247–295 are vacuolar; the sequence is KIQEANPKSGLAQSSMVSVYCTYLTMSAMSSEPDDKMCNPLVRSSGTRK. The chain crosses the membrane as a helical span at residues 296-318; sequence FSIILGSLFTFIAIAYTTTRAAA. Topologically, residues 319 to 398 are cytoplasmic; it reads NSAFQGTNTN…DDERTGTKYN (80 aa). The helical transmembrane segment at 399 to 421 threads the bilayer; that stretch reads YTLFHVIFFLATQWIAILLTINV. Residues 422-435 are Vacuolar-facing; that stretch reads TQDDVGDFIPVGRT. Residues 436 to 458 traverse the membrane as a helical segment; the sequence is YFYSWVKIVSAWICYALYGWTVV. The Cytoplasmic segment spans residues 459–473; the sequence is APAIMPDRFDYENYY.

This sequence belongs to the TDE1 family.

The protein resides in the membrane. This Saccharomyces cerevisiae (strain ATCC 204508 / S288c) (Baker's yeast) protein is Membrane protein TMS1 (TMS1).